A 144-amino-acid polypeptide reads, in one-letter code: Transcription antitermination protein NusB (144 aa).

This sequence belongs to the NusB family.

Involved in transcription antitermination. Required for transcription of ribosomal RNA (rRNA) genes. Binds specifically to the boxA antiterminator sequence of the ribosomal RNA (rrn) operons. This chain is Transcription antitermination protein NusB, found in Dictyoglomus thermophilum (strain ATCC 35947 / DSM 3960 / H-6-12).